The sequence spans 202 residues: uncharacterized protein (202 aa).

Positions 14-74 (NAKTERILDV…AMADRYFQRC (61 aa)) constitute an HTH tetR-type domain.

This is an uncharacterized protein from Xanthobacter autotrophicus.